The sequence spans 1135 residues: MNNDIILVVNQIEQALSLLHDPKSNNKQREESQVFLEEIKTRANAHSYAIAIITTSNNDILKHFALHIIETLVKNRWYECNDQERELIKKEILELMRRITSNEPKFIKEKLVTILVDVIKRDWPQRWMNLLTSLIEISKISDTQTELVLSTFGLLPHDIIFDTGSTSQVLSDQRRKDLMAGINLAVTSLFEYFYQLLESKYTQYKQPTPATTTTPQQTKQVIHLINVLLTTLRSYIEWVPSKVIFDHKLDQIFCQLILDVPFRMGACENLILFLGRKGRPDERIELIQTPFNFMENFLNSIKINSDFEDDYSFHKRITQALTILGTVHLNAYDDKHKIPNNYNIYLQLMLQMVSHPSILLSSFVLPFWHTFIKVESLELSYLEEVIKQIMETMLVKFVRIGDPEKSDSEQSKYSEIDFGTSKEWSNFFGGVRTRYLDIIKLITIQRREMAYIFIATKVADVLDALKANLNVASLSHEQTLVLESHSHILDSILLNIKDFTPESSLFFNKEQQQQPNIIQLTDRVLNLLFEINSTEPNITSFQIDCLQAYILYYQTNPESIKFLLNKIVPLIPFPGLDNPNRSFQNSVLHTRRRAISSLIGISTNISHLMKPYFDILYKSVVELFQKNVVTETEKVMLFHLLIVFSNNLPSYQQTLDFYKGILTPIIEQWVSLEMSTALSSPDAFIQYLGLSIADSQNLDATLVSRRKNIQYVASTLQIFWKKSQIPTNSSDELFAPFISNGISYNGKWPISSFVKQVLPGVLSLTRTLHQLWMPEHRAKIHPSLSTIFNLDDSITAPLLGFEYHKEQKSESSNVTFLRNILDCLRDACYEIVGYGFNHSDELFSLPDLPLVLLDSVFSYLESIENRHLKLLVKHILNYLIKNCPTKLEHTIFEPILPLLFSVLFNRIKAGWELIKLRSQKGEKENEKNEIVEDKILRDVSMEFLMCCSNIITQSPNYIFSSIDVMTPMVYGISSCLMAMDTPILKKSLIVSTQLLVDHEKVNDPKFFKLIGSEMFGCCIKILIVNKFAEFSNDIQSIIRLIYMKYYQICNYPQEILLSLPNITPPILQAFNKDLISTRSEKSQKVLFKKLLQDVIGIPLNKLKKESILDLPEKLFISKISDQSNENISNISNLFN.

The 86-residue stretch at 32–117 (SQVFLEEIKT…KEKLVTILVD (86 aa)) folds into the Importin N-terminal domain. The segment at 630–631 (TE) is pre-siRNA binding.

It belongs to the exportin family. Found in a nuclear export complex with RanGTP, exportin and pre-miRNA.

Its subcellular location is the nucleus. It localises to the cytoplasm. In terms of biological role, mediates the nuclear export of proteins bearing a double-stranded RNA binding domain (dsRBD) and double-stranded RNAs (cargos). Functionally, mediates the nuclear export of micro-RNA precursors, which form short hairpins. This Dictyostelium discoideum (Social amoeba) protein is Exportin-5 (xpo5).